The chain runs to 212 residues: Ribosomal RNA small subunit methyltransferase G (212 aa).

Residues Gly73, Phe78, 96-98 (ESS), 124-125 (VE), and Arg141 each bind S-adenosyl-L-methionine.

This sequence belongs to the methyltransferase superfamily. RNA methyltransferase RsmG family.

It localises to the cytoplasm. In terms of biological role, specifically methylates the N7 position of a guanine in 16S rRNA. This Aster yellows witches'-broom phytoplasma (strain AYWB) protein is Ribosomal RNA small subunit methyltransferase G.